The primary structure comprises 412 residues: Serine hydroxymethyltransferase (412 aa).

(6S)-5,6,7,8-tetrahydrofolate-binding positions include L117 and 121–123; that span reads GHL. K226 is modified (N6-(pyridoxal phosphate)lysine). (6S)-5,6,7,8-tetrahydrofolate is bound by residues E242 and 350–352; that span reads SPF.

Belongs to the SHMT family. As to quaternary structure, homodimer. The cofactor is pyridoxal 5'-phosphate.

It is found in the cytoplasm. It carries out the reaction (6R)-5,10-methylene-5,6,7,8-tetrahydrofolate + glycine + H2O = (6S)-5,6,7,8-tetrahydrofolate + L-serine. It functions in the pathway one-carbon metabolism; tetrahydrofolate interconversion. The protein operates within amino-acid biosynthesis; glycine biosynthesis; glycine from L-serine: step 1/1. Its function is as follows. Catalyzes the reversible interconversion of serine and glycine with tetrahydrofolate (THF) serving as the one-carbon carrier. Also exhibits THF-independent aldolase activity toward beta-hydroxyamino acids, producing glycine and aldehydes, via a retro-aldol mechanism. This chain is Serine hydroxymethyltransferase, found in Methanosarcina mazei (strain ATCC BAA-159 / DSM 3647 / Goe1 / Go1 / JCM 11833 / OCM 88) (Methanosarcina frisia).